An 87-amino-acid polypeptide reads, in one-letter code: Putative regulatory protein CHY_1489 (87 aa).

This sequence belongs to the RemA family.

The chain is Putative regulatory protein CHY_1489 from Carboxydothermus hydrogenoformans (strain ATCC BAA-161 / DSM 6008 / Z-2901).